Reading from the N-terminus, the 707-residue chain is UvrABC system protein C (707 aa).

One can recognise a GIY-YIG domain in the interval 14 to 94; it reads AEPGCYLMKD…IKKHRPRFNV (81 aa). The UVR domain maps to 206-241; it reads GELVERLRGRMAGAAEGLRFEEAARLRDQLQAVERS. The interval 654–684 is disordered; sequence PDAPPAAADEPSGAPEGTPAGGPAEAIPDAA. Positions 658 to 684 are enriched in low complexity; that stretch reads PAAADEPSGAPEGTPAGGPAEAIPDAA.

It belongs to the UvrC family. Interacts with UvrB in an incision complex.

The protein localises to the cytoplasm. In terms of biological role, the UvrABC repair system catalyzes the recognition and processing of DNA lesions. UvrC both incises the 5' and 3' sides of the lesion. The N-terminal half is responsible for the 3' incision and the C-terminal half is responsible for the 5' incision. The sequence is that of UvrABC system protein C from Anaeromyxobacter dehalogenans (strain 2CP-C).